The following is a 571-amino-acid chain: Urease subunit alpha (571 aa).

The region spanning 134–571 (GAIDTHIHFI…LPMAQRYFLF (438 aa)) is the Urease domain. His-139, His-141, and Lys-222 together coordinate Ni(2+). An N6-carboxylysine modification is found at Lys-222. His-224 is a binding site for substrate. Ni(2+) contacts are provided by His-251 and His-277. Residue His-325 is the Proton donor of the active site. Asp-365 serves as a coordination point for Ni(2+).

The protein belongs to the metallo-dependent hydrolases superfamily. Urease alpha subunit family. As to quaternary structure, heterotrimer of UreA (gamma), UreB (beta) and UreC (alpha) subunits. Three heterotrimers associate to form the active enzyme. It depends on Ni cation as a cofactor. Post-translationally, carboxylation allows a single lysine to coordinate two nickel ions.

It localises to the cytoplasm. It carries out the reaction urea + 2 H2O + H(+) = hydrogencarbonate + 2 NH4(+). The protein operates within nitrogen metabolism; urea degradation; CO(2) and NH(3) from urea (urease route): step 1/1. This Bordetella bronchiseptica (strain ATCC BAA-588 / NCTC 13252 / RB50) (Alcaligenes bronchisepticus) protein is Urease subunit alpha.